The primary structure comprises 386 residues: Zinc finger CCCH domain-containing protein 39 (386 aa).

Residues 1–90 (MDSSYSDSRP…SSSNPWMVPS (90 aa)) are disordered. Over residues 20–37 (WNQTQMIDSMANPMNNEQ) the composition is skewed to polar residues. The segment covering 43-58 (LSESQSQSQPSQQLQP) has biased composition (low complexity). A compositionally biased stretch (polar residues) spans 72-85 (NPASSFPQPSSSNP). Residues 104–131 (FYKTRMCAKFRAGTCRNGELCNFAHGIE) form a C3H1-type 1 zinc finger. The disordered stretch occupies residues 136–166 (PPSNWQEIVGPPPAGQDRERERERERERERP). Basic and acidic residues predominate over residues 151 to 166 (QDRERERERERERERP). 2 C3H1-type zinc fingers span residues 183 to 211 (ILRM…HEDL) and 269 to 297 (YWKT…HGQA).

This Arabidopsis thaliana (Mouse-ear cress) protein is Zinc finger CCCH domain-containing protein 39.